The chain runs to 507 residues: MKFATILSTTALALSSLVASKPIFLSKRDAGSSAAAAWRSESIYQLVTDRFARTDGSTSATCNTGDRVYCGGTFQGIIDKLDYIQGMGFTAIWISPVVEQIPDDTGYGYAYHGYWMKDIYAINSNFGTADDLKNLSNELHKRNMKLMVDIVTNHYAWNGAGSSVAYSNYNPFNQQSYFHDYCLITNYDDQTNVEDCWEGDNTVSLPDLRTEDSDVSSIFNLWVAELVSNYSIDGLRIDSAKHVDESFYPSFQSAAGVYLLGEVYDGDPAYTCPYQNYMSGVTNYPLYYPMLRFFQGTSNSVDELNAMISSLESDCKDITLLGNFIENHDQPRLPSYTSDSALIKNAIAFNLMSDGIPIIYYGQEQGYSGSSDPNNREALWLSGYSTSNGYYKLISSVNQIRNQAIYKDSKYTTYWSDVLYASGHVIALQRGADDQRIVSVFNNLGSSGSQTVTFSTKYSGGEKVVDVLTCQTSYANSDSTLTVSISGGAPRIYAPASLIANSGICNF.

The first 20 residues, 1–20, serve as a signal peptide directing secretion; the sequence is MKFATILSTTALALSSLVAS. An intrachain disulfide couples cysteine 62 to cysteine 70. Position 115 (tryptophan 115) interacts with substrate. Asparagine 153 contacts Ca(2+). Residue histidine 154 participates in substrate binding. The cysteines at positions 182 and 196 are disulfide-linked. Positions 194 and 207 each coordinate Ca(2+). Residue asparagine 229 is glycosylated (N-linked (GlcNAc...) asparagine). Arginine 236 contacts substrate. 3 residues coordinate Ca(2+): aspartate 238, histidine 242, and glutamate 262. The active-site Nucleophile is aspartate 238. 241-242 contacts substrate; the sequence is KH. Glutamate 262 functions as the Proton donor in the catalytic mechanism. Glycine 266 contacts substrate. Cysteine 272 and cysteine 315 form a disulfide bridge. The substrate site is built by aspartate 329 and arginine 376. Cysteines 470 and 505 form a disulfide.

This sequence belongs to the glycosyl hydrolase 13 family. Ca(2+) is required as a cofactor.

The enzyme catalyses Endohydrolysis of (1-&gt;4)-alpha-D-glucosidic linkages in polysaccharides containing three or more (1-&gt;4)-alpha-linked D-glucose units.. The sequence is that of Alpha-amylase 2 (SWA2) from Schwanniomyces occidentalis (Yeast).